A 381-amino-acid polypeptide reads, in one-letter code: Diguanylate cyclase DosC (381 aa).

His-98 is a binding site for heme. One can recognise a GGDEF domain in the interval Thr-325–Ser-381. Asp-333 lines the Mg(2+) pocket. The substrate site is built by Asn-341 and Asp-350.

Heme serves as cofactor. Requires Mg(2+) as cofactor.

The catalysed reaction is 2 GTP = 3',3'-c-di-GMP + 2 diphosphate. It participates in purine metabolism; 3',5'-cyclic di-GMP biosynthesis. Functionally, globin-coupled heme-based oxygen sensor protein displaying diguanylate cyclase (DGC) activity in response to oxygen availability. Thus, catalyzes the synthesis of cyclic diguanylate (c-di-GMP) via the condensation of 2 GTP molecules. Cyclic-di-GMP is a second messenger which controls cell surface-associated traits in bacteria. This is Diguanylate cyclase DosC (dosC) from Shigella flexneri.